The sequence spans 361 residues: Ankyrin repeat domain-containing protein 16 (361 aa).

ANK repeat units lie at residues 36-66 (AGDTLLHCAARHGHRDVLAYLAEAWGMDIEA), 70-99 (DYKRPLHEAASMGHRDCVRYLLGRGAAVDC), 103-132 (ADWTPLMMACTRKNLGVIQELVEHGANPLL), 136-165 (DGWNSFHIASREGDPLILQYLLTVCPGAWK), 170-200 (IRRTPLHTAAMHGHLEAVKVLLKRCQYEPDY), 204-234 (CGVTALMDAIQCGHIDVARLLLDEHGACLSA), 238-268 (LGAQALHRAAVTGQDEAIRFLVSELGVDVDV), 273-302 (THLTALHYAAKEGHTSTIQTLLSLGADINS), and 306-335 (KNRSALHLACAGQHLACAKFLLQSGLKDSE).

In terms of assembly, interacts with AARS; the interaction is direct.

The protein localises to the cytoplasm. The protein resides in the nucleus. Its function is as follows. Required to prevent the misactivation of serine (Ser) with tRNA(Ala) by promoting the hydrolysis of Ser-mischarged tRNA(Ala), thereby playing a role in translational fidelity. Binds directly to the catalytic domain of AARS/AlaRS and captures Ser that is misactivated by AARS/AlaRS, preventing the charging of Ser adenylates to tRNA(Ala) and precluding Ser misincorporation in nascent peptides. In Homo sapiens (Human), this protein is Ankyrin repeat domain-containing protein 16.